We begin with the raw amino-acid sequence, 455 residues long: Ribulose bisphosphate carboxylase large chain (455 aa).

Lys-5 is modified (N6,N6,N6-trimethyllysine). Substrate-binding residues include Asn-114 and Thr-164. The active-site Proton acceptor is Lys-166. Lys-168 serves as a coordination point for substrate. Residues Lys-192, Asp-194, and Glu-195 each contribute to the Mg(2+) site. N6-carboxylysine is present on Lys-192. The active-site Proton acceptor is His-285. Positions 286, 318, and 370 each coordinate substrate.

The protein belongs to the RuBisCO large chain family. Type I subfamily. As to quaternary structure, heterohexadecamer of 8 large chains and 8 small chains; disulfide-linked. The disulfide link is formed within the large subunit homodimers. Mg(2+) serves as cofactor. Post-translationally, the disulfide bond which can form in the large chain dimeric partners within the hexadecamer appears to be associated with oxidative stress and protein turnover.

The protein resides in the plastid. It is found in the chloroplast. The enzyme catalyses 2 (2R)-3-phosphoglycerate + 2 H(+) = D-ribulose 1,5-bisphosphate + CO2 + H2O. It catalyses the reaction D-ribulose 1,5-bisphosphate + O2 = 2-phosphoglycolate + (2R)-3-phosphoglycerate + 2 H(+). Functionally, ruBisCO catalyzes two reactions: the carboxylation of D-ribulose 1,5-bisphosphate, the primary event in carbon dioxide fixation, as well as the oxidative fragmentation of the pentose substrate in the photorespiration process. Both reactions occur simultaneously and in competition at the same active site. The chain is Ribulose bisphosphate carboxylase large chain from Lupinus microcarpus (Chick lupine).